A 1440-amino-acid chain; its full sequence is ABC transporter G family member 46 (1440 aa).

The disordered stretch occupies residues Met-1–Asp-42. Positions Ser-21 to Ser-32 are enriched in low complexity. The ABC transporter 1 domain maps to Ala-137–Glu-419. Gly-170–Thr-177 is an ATP binding site. Positions Lys-497–Phe-710 constitute an ABC transmembrane type-2 1 domain. 7 consecutive transmembrane segments (helical) span residues Leu-516–Ile-536, Ala-561–Phe-581, Thr-603–Phe-623, Phe-634–Leu-654, Val-659–Ile-679, Trp-688–Asn-708, and Ile-745–Leu-765. The disordered stretch occupies residues Asp-794–Pro-829. Polar residues predominate over residues Gly-812–Pro-829. In terms of domain architecture, ABC transporter 2 spans Met-843–Glu-1095. Gly-888–Thr-895 provides a ligand contact to ATP. The region spanning Ile-1168–Phe-1382 is the ABC transmembrane type-2 2 domain. The next 7 membrane-spanning stretches (helical) occupy residues Ile-1188–Gly-1208, Leu-1219–Gln-1236, Val-1271–Ser-1291, Phe-1302–Met-1322, Met-1332–Ile-1352, Ile-1357–Leu-1377, and Leu-1410–Phe-1430.

Belongs to the ABC transporter superfamily. ABCG family. PDR (TC 3.A.1.205) subfamily.

Its subcellular location is the membrane. Functionally, may be a general defense protein. This is ABC transporter G family member 46 from Oryza sativa subsp. japonica (Rice).